The sequence spans 593 residues: Myc box-dependent-interacting protein 1 (593 aa).

Residue alanine 2 is modified to N-acetylalanine. Residues 2–122 form an interaction with BIN2 region; it reads AEMGSKGVTA…DYHQKLVDQA (121 aa). 2 coiled-coil regions span residues 15-42 and 193-267; these read ASNV…TKDE and HLVA…NDVL. Positions 29–276 constitute a BAR domain; that stretch reads VLQKLGKADE…LVGLEKQHGS (248 aa). Disordered stretches follow at residues 280–354 and 400–488; these read TVKA…KEVK and PVTS…AASS. Phosphoserine is present on residues serine 296, serine 298, and serine 303. Phosphothreonine is present on residues threonine 307 and threonine 323. The residue at position 331 (serine 331) is a Phosphoserine. The tract at residues 378–421 is clathrin-binding; the sequence is FEAPGPFSEQASLLDLDFDPLPPVTSPVKAPTPSGQSIPWDLWE. The region spanning 520 to 593 is the SH3 domain; the sequence is GFMFKVQAQH…FPENFTERVP (74 aa).

As to quaternary structure, heterodimer with AMPH. Binds SH3GLB1. Interacts (via SH3 domain) with DNM1. Interacts with SYNJ1. Interacts (via SH3 domain) with DNM2. Isoform IIA interacts with CLTC. Isoform IIB does not interact with CLTC. Isoform IIC1 does not interact with CLTC. Isoform IIC2 does not interact with CLTC. Interacts with AP2A2. Interacts with AP2B1. Interacts with MYC (via N-terminal transactivation domain); the interaction requires the integrity of the conserved MYC box regions 1 and 2. Interacts with BIN2. Interacts with SNX4. Interacts (via BAR domain) with BACE1. Binds (via BAR domain) F-actin. (Microbial infection) Interacts (SH3 domain) with HCV NS5A. Post-translationally, phosphorylated by protein kinase C. Ubiquitous. Highest expression in the brain and muscle. Expressed in oligodendrocytes. Isoform IIA is expressed only in the brain, where it is detected in the gray matter, but not in the white matter. Isoform BIN1 is widely expressed with highest expression in skeletal muscle.

Its subcellular location is the nucleus. It localises to the cytoplasm. The protein resides in the endosome. It is found in the cell membrane. The protein localises to the sarcolemma. Its subcellular location is the T-tubule. Is a key player in the control of plasma membrane curvature, membrane shaping and membrane remodeling. Required in muscle cells for the formation of T-tubules, tubular invaginations of the plasma membrane that function in depolarization-contraction coupling. Is a negative regulator of endocytosis. Is also involved in the regulation of intracellular vesicles sorting, modulation of BACE1 trafficking and the control of amyloid-beta production. In neuronal circuits, endocytosis regulation may influence the internalization of PHF-tau aggregates. May be involved in the regulation of MYC activity and the control cell proliferation. Has actin bundling activity and stabilizes actin filaments against depolymerization in vitro. The chain is Myc box-dependent-interacting protein 1 (BIN1) from Homo sapiens (Human).